We begin with the raw amino-acid sequence, 171 residues long: Sorcin (171 aa).

4 consecutive EF-hand domains span residues 3–38 (MDTN…GLGT), 40–69 (LNIR…LGLF), 70–105 (KYVQ…FGYH), and 106–140 (LSPQ…LQTL). Residues Asp-16, Asp-18, Ser-20, Ser-22, Glu-27, Asp-53, Asp-55, Asn-57, Thr-59, Glu-64, Asp-83, Asp-85, Ser-87, Ser-89, and Glu-94 each coordinate Ca(2+).

Its subcellular location is the cytoplasm. Its function is as follows. Calcium-binding protein. The protein is Sorcin of Schistosoma japonicum (Blood fluke).